The chain runs to 1402 residues: Eukaryotic translation initiation factor 4 gamma 1 (1402 aa).

2 disordered regions span residues 1–123 (MSGA…SPEP) and 165–402 (HEPN…YEYK). Phosphothreonine occurs at positions 11 and 27. Residues 53-64 (GPEHSPSESQPS) show a composition bias toward low complexity. Residues 65–76 (SPSPTPSPPPIL) are compositionally biased toward pro residues. A Phosphoserine modification is found at Ser-120. Positions 238-251 (ASATPPAVPSATPA) are enriched in low complexity. The segment covering 261–275 (QEEEGEEEEEEEEGE) has biased composition (acidic residues). 2 stretches are compositionally biased toward basic and acidic residues: residues 280 to 290 (ESDKGGEDLHP) and 324 to 340 (KELN…DAFK). Residues 359-370 (PTPESEGSSGPS) show a composition bias toward low complexity. Positions 379 to 388 (WDAKEDKIHN) are enriched in basic and acidic residues. Thr-452 is modified (phosphothreonine). Disordered regions lie at residues 476-517 (ANLG…PPKG), 536-563 (AEKA…GSKT), 600-636 (SKGS…ATTE), and 828-1028 (MAKG…KREA). Positions 479-488 (GRPALSSRGP) are enriched in low complexity. Omega-N-methylarginine occurs at positions 490 and 499. A compositionally biased stretch (basic and acidic residues) spans 547-563 (TAADKDRGEEDADGSKT). The region spanning 567-793 (FRRVRSILNK…QDVLDLRQSN (227 aa)) is the MIF4G domain. The span at 602 to 621 (GSLTSSLRRPFQNPTSQWPS) shows a compositional bias: polar residues. The residue at position 832 (Ser-832) is a Phosphoserine. 2 positions are modified to omega-N-methylarginine: Arg-836 and Arg-846. Phosphoserine is present on residues Ser-881 and Ser-896. Residues 892 to 913 (GGRLSWGKGSSGSGAKPSDAAS) are compositionally biased toward low complexity. The residue at position 899 (Lys-899) is an N6-acetyllysine. Residues 918-937 (PATSTLNRFSALQQAVPTES) are compositionally biased toward polar residues. Residues Ser-948 and Ser-950 each carry the phosphoserine modification. The segment covering 949-981 (LSRERGGKAGEPRRRLERSERGGDRGDRLDRAR) has biased composition (basic and acidic residues). Ser-988 bears the Phosphoserine; by PKC/PRKCA mark. Positions 989–1028 (FSKEVEERSRERPSQPEGLRKAASLTEDRDRGRDAAKREA) are enriched in basic and acidic residues. Ser-990, Ser-997, and Ser-1012 each carry phosphoserine. Thr-1014 is subject to Phosphothreonine. Ser-1034 and Ser-1041 each carry phosphoserine. An MI domain is found at 1044–1166 (ELEKKSKAII…PMGELFREIT (123 aa)). Positions 1231–1401 (EESEAPGQRA…REVEEEESDH (171 aa)) constitute a W2 domain. Ser-1399 bears the Phosphoserine mark.

This sequence belongs to the eukaryotic initiation factor 4G family. As to quaternary structure, eIF4F is a multi-subunit complex, the composition of which varies with external and internal environmental conditions. It is composed of at least EIF4A, EIF4E (cap-binding) and EIF4G1/EIF4G3. Interacts with eIF3 complex, mutually exclusive with EIF4A1 or EIF4A2, EIF4E and through its N-terminus with PABPC1. Interacts with EIF4E or with EIF1 (mutually exclusive) through a common binding site. Interacts through its C-terminus with the serine/threonine kinases MKNK1, and with MKNK2. Appears to act as a scaffold protein, holding these enzymes in place to phosphorylate EIF4E. Non-phosphorylated EIF4EBP1 competes with EIF4G1/EIF4G3 to interact with EIF4E; insulin stimulated MAP-kinase (MAPK1 and MAPK3) phosphorylation of EIF4EBP1 causes dissociation of the complex allowing EIF4G1/EIF4G3 to bind and consequent initiation of translation. EIF4G1/EIF4G3 interacts with PABPC1 to bring about circularization of the mRNA. Interacts with EIF4E3. Interacts with CIRBP and MIF4GD. Interacts with RBM4. Interacts with HNRNPD/AUF1; the interaction requires RNA. Interacts with DDX3X; the interaction requires RNA. Interacts with DAZAP2. Phosphorylated at multiple sites in vivo. Phosphorylation at Ser-988 by PRKCA induces binding to MKNK1.

Its subcellular location is the cytoplasm. The protein resides in the nucleus. It is found in the stress granule. In terms of biological role, component of the protein complex eIF4F, which is involved in the recognition of the mRNA cap, ATP-dependent unwinding of 5'-terminal secondary structure and recruitment of mRNA to the ribosome. Exists in two complexes, either with EIF1 or with EIF4E (mutually exclusive). Together with EIF1, is required for leaky scanning, in particular for avoiding cap-proximal start codon. Together with EIF4E, antagonizes the scanning promoted by EIF1-EIF4G1 and locates the start codon (through a TISU element) without scanning. As a member of the eIF4F complex, required for endoplasmic reticulum stress-induced ATF4 mRNA translation. The protein is Eukaryotic translation initiation factor 4 gamma 1 (EIF4G1) of Oryctolagus cuniculus (Rabbit).